The following is a 776-amino-acid chain: MADRSAIQLIDEEKEFHQSALQYFQQCIGNRDVGLDYHVISVFGSQSSGKSTLLNVLFNTNFDTMDAQVKRQQTTKGIWLAHTKQVNTTIEIDNDRPDIFVLDVEGSDGSERGEDQDFERKAALFAIAVSEVLIVNMWEQQIGLYQGNNMALLKTVFEVNLSLFGKNDNDHKVLLLFVIRDHVGVTPLSSLSDSVTRELEKIWTELSKPAGCEGSSLYDYFDLKFVGLAHKLLQEDKFTQDVKKLGDSFVMKGTENYYFKPQYHHRLPLDGWTMYAENCWDQIERNKDLDLPTQQILVARFKTEEISNEALEEFISKYDESIAPLKGNLGSLTSQLVKLKEECLTKYDEQASRYARNVYMEKREALNTNLNSHISGTINEFLESLMEKLWDDLKLEVSSRDKATTSFVESVAAGKSKIEKEFNESMETFKKLGLLISNEEITCKFSDDIEERIKQLRDAELKAKIGRIKKNLVPELKDHVIHLLSHPSKKVWDDIMNDFESTIKDNISAYQVEKDKYDFKIGLSESENAKIYKNIRILAWRTLDTTVHDYLKIDTIVSILRDRFEDVFRYDAEGSPRLWKTEEEIDGTFRVAKEHALEVFEVLSLAVTSDNVEIIPDVPMAEEESGEDNEIYRDNEGVFHSRRFAHILTELQKENVLDQFRRQINITVLDSKRSIITTRTHIPPWIYVLLAVLGWNEFVAVIRNPLFVTLTLILGATFFVIHKFGLWGPVVNVVQSAVGETRTAIKDKLRQFVVEDHEVKESFEMKDFSKNEQKEK.

The Cytoplasmic segment spans residues 1 to 681 (MADRSAIQLI…KRSIITTRTH (681 aa)). Positions 34 to 263 (GLDYHVISVF…TENYYFKPQY (230 aa)) constitute a GB1/RHD3-type G domain. 44–51 (GSQSSGKS) is a binding site for GTP. Residues 682-702 (IPPWIYVLLAVLGWNEFVAVI) traverse the membrane as a helical segment. The Lumenal segment spans residues 703–705 (RNP). A helical transmembrane segment spans residues 706-726 (LFVTLTLILGATFFVIHKFGL). Residues 727-776 (WGPVVNVVQSAVGETRTAIKDKLRQFVVEDHEVKESFEMKDFSKNEQKEK) lie on the Cytoplasmic side of the membrane.

Belongs to the TRAFAC class dynamin-like GTPase superfamily. GB1/RHD3 GTPase family. RHD3 subfamily. Interacts with RTN1 and YOP1; GTP binding is not required for these interactions.

The protein localises to the endoplasmic reticulum membrane. Cooperates with the reticulon proteins RTN1 and RTN2 and the tubule-shaping DP1 family protein YOP1 to generate and maintain the structure of the tubular endoplasmic reticulum network. Has GTPase activity, which is required for its function in ER organization. The sequence is that of Protein SEY1 from Saccharomyces cerevisiae (strain RM11-1a) (Baker's yeast).